The primary structure comprises 396 residues: Tryptophan synthase beta chain (396 aa).

K86 carries the post-translational modification N6-(pyridoxal phosphate)lysine.

This sequence belongs to the TrpB family. In terms of assembly, tetramer of two alpha and two beta chains. Pyridoxal 5'-phosphate is required as a cofactor.

It carries out the reaction (1S,2R)-1-C-(indol-3-yl)glycerol 3-phosphate + L-serine = D-glyceraldehyde 3-phosphate + L-tryptophan + H2O. The protein operates within amino-acid biosynthesis; L-tryptophan biosynthesis; L-tryptophan from chorismate: step 5/5. The beta subunit is responsible for the synthesis of L-tryptophan from indole and L-serine. This is Tryptophan synthase beta chain from Pectobacterium carotovorum subsp. carotovorum (strain PC1).